The chain runs to 39 residues: Cytochrome b559 subunit beta (39 aa).

Residues 14–30 (WLAVHGLAVPTVFFLGS) form a helical membrane-spanning segment. Histidine 18 lines the heme pocket.

The protein belongs to the PsbE/PsbF family. In terms of assembly, heterodimer of an alpha subunit and a beta subunit. PSII is composed of 1 copy each of membrane proteins PsbA, PsbB, PsbC, PsbD, PsbE, PsbF, PsbH, PsbI, PsbJ, PsbK, PsbL, PsbM, PsbT, PsbX, PsbY, PsbZ, Psb30/Ycf12, at least 3 peripheral proteins of the oxygen-evolving complex and a large number of cofactors. It forms dimeric complexes. It depends on heme b as a cofactor.

The protein localises to the plastid membrane. Its function is as follows. This b-type cytochrome is tightly associated with the reaction center of photosystem II (PSII). PSII is a light-driven water:plastoquinone oxidoreductase that uses light energy to abstract electrons from H(2)O, generating O(2) and a proton gradient subsequently used for ATP formation. It consists of a core antenna complex that captures photons, and an electron transfer chain that converts photonic excitation into a charge separation. The chain is Cytochrome b559 subunit beta from Cuscuta europaea (European dodder).